The chain runs to 281 residues: MHSVVCIKQLPDSAQIRVHPVTNTIMRQGVPAIINPYDLFALEEALRLKDKFGGTVTVVTMGPPMAEAALRKCLSFGADDAILVSDRAFAGSDTLATSYALSAVIRKIMEDMPVDLIFTGKQTIDGDTAQVGPGIAKRLDYQLLTYVSRIVDVDTAKKEIQVERRAEGGVQLLETSLPCLITMLEGTNEMRFGDLDDLFRAARHELKVWDRVAAGIDTVEMIGLKGSPTVVSKVFAPKPRSKRAELIESHDSDPKNLAEAALAKLFTQHPNLEQEIAKRAV.

Belongs to the ETF beta-subunit/FixA family. In terms of assembly, fixA and FixB form a heterodimer.

Its function is as follows. May play a role in a redox process involved in nitrogen fixation. In Azotobacter vinelandii, this protein is Protein FixA (fixA).